A 407-amino-acid polypeptide reads, in one-letter code: Cell division control protein 12 (407 aa).

An N-acetylserine modification is found at Ser2. The Septin-type G domain occupies 31-314; it reads EGGTFTVMLC…ETYRRLRLEG (284 aa). The G1 motif stretch occupies residues 41–48; that stretch reads GESGLGKT. GTP contacts are provided by residues 41–48, Thr75, Gly101, 180–188, Gly247, and Arg263; these read GESGLGKT and KADTLTAQE. Residues 98 to 101 form a G3 motif region; the sequence is DTPG. The interval 179–182 is G4 motif; it reads AKAD. Residues 344–406 are a coiled coil; sequence EEENALKKYF…KSLQVKKSHL (63 aa).

It belongs to the TRAFAC class TrmE-Era-EngA-EngB-Septin-like GTPase superfamily. Septin GTPase family. In terms of assembly, component of the septin complex which consists of CDC3, CDC10, CDC11, CDC12 and probably SHS1 and rearranges to a cortical collar of highly ordered filaments at the mother-bud-neck. A complex formed by CDC3, CDC10, CDC11 and CDC12 is capable of forming long filaments in vitro and the components seem to be present in a 2:2:2:2 arrangement in vivo. The filaments are proposed to be formed by the end-to-end polymerization of CDC3-CDC12-CDC11 complexes with CDC10 serving as a bridge to bundle the polymers into paired filaments. Component of the GIN4 complex composed of at least BNI5, CDC3, CDC10, CDC11, CDC12, GIN4, NAP1 and SHS1. Self-associates. Interacts with SYP1.

Its subcellular location is the membrane. It localises to the bud neck. Its function is as follows. Septins are GTPases involved in cytokinesis that assemble early in the cell cycle as a patch at the incipient bud site and form a ring approximate 15 minutes before bud emergence, which transforms into an hour-glass shaped collar of cortical filaments that spans both sides of the mother-bud neck. This collar persists until just before cytokinesis, when it splits into two rings that occupy opposite sides of the neck. The septins at the bud neck serve as a structural scaffold that recruits different components involved in diverse processes at specific stages during the cell cycle. Many proteins bind asymmetrically to the septin collar. The septin assembly is regulated by protein kinases GIN4 and/or CLA4. May act by recruiting MYO1 and HOF1, a protein involved in septation, to the site of cleavage. Septins are also involved in cell morphogenesis, bud site selection, chitin deposition, cell cycle regulation, cell compartmentalization and spore wall formation. This Saccharomyces cerevisiae (strain ATCC 204508 / S288c) (Baker's yeast) protein is Cell division control protein 12 (CDC12).